The sequence spans 242 residues: Triosephosphate isomerase (242 aa).

8-10 is a binding site for substrate; the sequence is NWK. H98 serves as the catalytic Electrophile. The active-site Proton acceptor is the E167. Residues G173, S205, and 226 to 227 contribute to the substrate site; that span reads GG.

It belongs to the triosephosphate isomerase family. As to quaternary structure, homodimer.

It localises to the cytoplasm. The enzyme catalyses D-glyceraldehyde 3-phosphate = dihydroxyacetone phosphate. It participates in carbohydrate biosynthesis; gluconeogenesis. It functions in the pathway carbohydrate degradation; glycolysis; D-glyceraldehyde 3-phosphate from glycerone phosphate: step 1/1. Involved in the gluconeogenesis. Catalyzes stereospecifically the conversion of dihydroxyacetone phosphate (DHAP) to D-glyceraldehyde-3-phosphate (G3P). This chain is Triosephosphate isomerase, found in Mesomycoplasma hyopneumoniae (strain 7448) (Mycoplasma hyopneumoniae).